The following is a 753-amino-acid chain: Cytoplasmic polyadenylation element-binding protein 3 (753 aa).

The interval 111-286 (VGESTPSSAG…NGSWHGELPP (176 aa)) is disordered. Basic and acidic residues-rich tracts occupy residues 131-142 (KPTEKISVDEPP) and 175-188 (FGKEEQKPEPEVVK). The span at 227–239 (SPAKISSNSSSSS) shows a compositional bias: low complexity. Positions 265 to 279 (SRQGLSNRDNLSNGS) are enriched in polar residues. The RRM domain occupies 298-320 (IFVGGVPWDITEAALKDSFGEFG). Positions 567-589 (KAYAGPHRRPHLTSNSLSKSHGC) are disordered. Residues 578–589 (LTSNSLSKSHGC) show a composition bias toward polar residues.

In terms of biological role, cytoplasmic polyadenylation element binding protein that binds to and regulates the translation of specific mRNAs. The chain is Cytoplasmic polyadenylation element-binding protein 3 (cpb-3) from Caenorhabditis briggsae.